The following is a 120-amino-acid chain: cAMP-responsive element-binding protein-like 2 (120 aa).

The disordered stretch occupies residues methionine 1 to isoleucine 24. Residues lysine 10–proline 21 show a composition bias toward basic residues. Residues lysine 23–serine 86 form the bZIP domain. Residues lysine 29–arginine 60 are basic motif. The interval isoleucine 62–leucine 69 is leucine-zipper. The disordered stretch occupies residues threonine 93–tryptophan 120.

It belongs to the bZIP family. ATF subfamily. As to quaternary structure, interacts with CREB1; regulates CREB1 phosphorylation, stability and transcriptional activity. Interacts with immediate-early (IE) protein BICP22 of bovine herpesvirus-1 (BHV-1). Phosphorylated by AMPK.

It localises to the nucleus. Probable regulator of CREB1 transcriptional activity which is involved in adipose cells differentiation. May also play a regulatory role in the cell cycle. The chain is cAMP-responsive element-binding protein-like 2 (CREBL2) from Bos taurus (Bovine).